The sequence spans 221 residues: MSIESSATPTTPNAEALQLNSTEVRILGCLIEKQATNPETYPLTLNALVIACNQKTSRDPVMNLTQGQVGQSLRALEGRGLTRLVMGSRADRWEHKVDKGLELVPAQVILTGLLLLRGPQTVSELLTRSNRMHDFEDSEQVVHQLERLIARGLATLVPRQSGQREDRYMHLIGDPEDLQDLLAARQQAPERGNAASPAATQRLDELEARIAALEERLARLE.

Belongs to the UPF0502 family.

The chain is UPF0502 protein PSPTO_2686 from Pseudomonas syringae pv. tomato (strain ATCC BAA-871 / DC3000).